The following is a 563-amino-acid chain: Arginine--tRNA ligase (563 aa).

The 'HIGH' region signature appears at P121 to H131.

This sequence belongs to the class-I aminoacyl-tRNA synthetase family. In terms of assembly, monomer.

The protein localises to the cytoplasm. It catalyses the reaction tRNA(Arg) + L-arginine + ATP = L-arginyl-tRNA(Arg) + AMP + diphosphate. The chain is Arginine--tRNA ligase from Streptococcus pyogenes serotype M2 (strain MGAS10270).